Consider the following 616-residue polypeptide: Chaperone protein HscA (616 aa).

Belongs to the heat shock protein 70 family.

Its function is as follows. Chaperone involved in the maturation of iron-sulfur cluster-containing proteins. Has a low intrinsic ATPase activity which is markedly stimulated by HscB. Involved in the maturation of IscU. The protein is Chaperone protein HscA of Salmonella enteritidis PT4 (strain P125109).